The sequence spans 617 residues: Coiled-coil domain-containing protein 93 (617 aa).

Residues 1-16 (MVVPRGQEHRAPQEVE) are compositionally biased toward basic and acidic residues. The interval 1–20 (MVVPRGQEHRAPQEVETRED) is disordered. 2 coiled-coil regions span residues 285 to 474 (DEIK…IDEV) and 546 to 614 (LRQM…KLKA).

The protein belongs to the CCDC93 family.

It localises to the early endosome. Functionally, may be involved in copper-dependent ATP7A trafficking between the trans-Golgi network and vesicles in the cell periphery. The protein is Coiled-coil domain-containing protein 93 (CCDC93) of Gallus gallus (Chicken).